The chain runs to 362 residues: Peptide chain release factor 1 (362 aa).

The residue at position 238 (Gln-238) is an N5-methylglutamine.

Belongs to the prokaryotic/mitochondrial release factor family. In terms of processing, methylated by PrmC. Methylation increases the termination efficiency of RF1.

The protein resides in the cytoplasm. Functionally, peptide chain release factor 1 directs the termination of translation in response to the peptide chain termination codons UAG and UAA. The polypeptide is Peptide chain release factor 1 (Psychrobacter arcticus (strain DSM 17307 / VKM B-2377 / 273-4)).